The primary structure comprises 466 residues: Chromosomal replication initiator protein DnaA (466 aa).

A domain I, interacts with DnaA modulators region spans residues 1–85 (MSLSLWQHCL…FEVGNKPVSA (85 aa)). Positions 82 to 122 (PVSARTTESVPKTVTHPAVNSTPTNSQPVRPSWDNQPQSQL) are disordered. Residues 85-122 (ARTTESVPKTVTHPAVNSTPTNSQPVRPSWDNQPQSQL) show a composition bias toward polar residues. The interval 85-129 (ARTTESVPKTVTHPAVNSTPTNSQPVRPSWDNQPQSQLPELNYRS) is domain II. The segment at 130-346 (NVNPKHKFDN…GALNRVIANA (217 aa)) is domain III, AAA+ region. ATP is bound by residues Gly-174, Gly-176, Lys-177, and Thr-178. The tract at residues 347 to 466 (NFTGRAITID…FSNLIRTLSS (120 aa)) is domain IV, binds dsDNA.

The protein belongs to the DnaA family. Oligomerizes as a right-handed, spiral filament on DNA at oriC.

It localises to the cytoplasm. Plays an essential role in the initiation and regulation of chromosomal replication. ATP-DnaA binds to the origin of replication (oriC) to initiate formation of the DNA replication initiation complex once per cell cycle. Binds the DnaA box (a 9 base pair repeat at the origin) and separates the double-stranded (ds)DNA. Forms a right-handed helical filament on oriC DNA; dsDNA binds to the exterior of the filament while single-stranded (ss)DNA is stabiized in the filament's interior. The ATP-DnaA-oriC complex binds and stabilizes one strand of the AT-rich DNA unwinding element (DUE), permitting loading of DNA polymerase. After initiation quickly degrades to an ADP-DnaA complex that is not apt for DNA replication. Binds acidic phospholipids. The chain is Chromosomal replication initiator protein DnaA from Proteus mirabilis (strain HI4320).